The sequence spans 544 residues: MSAKDVKFGDSARSKMIAGVNVLADAVKVTLGPKGRNVVIDRSFGAPHITKDGVTVAKEITLKDKFENMGAQLVREVSSKTNDIAGDGTTTATVLAQAILNEGIKSVTAGMNPMDLKRGIDIAVRAVVENIRATAKPADDFKAIEQVGSISANSDETVGKLIAQAMEKVGKEGVITVEEGSGFEDALDVVEGMQFDRGYISPYFANKQDTLTAELENPFILLVDKKISNIRELITTLEAVAKTGKPLLIIAEDVEGEALATLVVNNMRGIIKVCAVKAPGFGDRRKAMLQDIAILTGATVISEEVGMSLEQASLQDLGTAHKITVSKENTVIVDGAGDANAIAERVQQIRAQIEESTSEYDKEKLQERVAKLAGGVAVIKIGAATEVEMKEKKDRVDDALHATRAAVEEGVVAGGGVALVRAVNSLDGLTGANDDQTVGINILRRAIEAPLRQIVSNAGDEPSVVINAVKAGEGNYGYNAATGVYGDMLEMGILDPAKVTRSALEHAASVAGLMLTTEAMITDIPEDKPAMPDMGGMGGMGGMM.

Residues 30–33 (TLGP), Lys-51, 87–91 (DGTTT), Gly-415, 479–481 (NAA), and Asp-495 contribute to the ATP site.

It belongs to the chaperonin (HSP60) family. Forms a cylinder of 14 subunits composed of two heptameric rings stacked back-to-back. Interacts with the co-chaperonin GroES.

The protein resides in the cytoplasm. It catalyses the reaction ATP + H2O + a folded polypeptide = ADP + phosphate + an unfolded polypeptide.. Functionally, together with its co-chaperonin GroES, plays an essential role in assisting protein folding. The GroEL-GroES system forms a nano-cage that allows encapsulation of the non-native substrate proteins and provides a physical environment optimized to promote and accelerate protein folding. The sequence is that of Chaperonin GroEL from Acinetobacter baylyi (strain ATCC 33305 / BD413 / ADP1).